We begin with the raw amino-acid sequence, 171 residues long: 3-hydroxydecanoyl-[acyl-carrier-protein] dehydratase (171 aa).

The active site involves H70.

The protein belongs to the thioester dehydratase family. FabA subfamily. Homodimer.

It localises to the cytoplasm. The enzyme catalyses a (3R)-hydroxyacyl-[ACP] = a (2E)-enoyl-[ACP] + H2O. It catalyses the reaction (3R)-hydroxydecanoyl-[ACP] = (2E)-decenoyl-[ACP] + H2O. It carries out the reaction (2E)-decenoyl-[ACP] = (3Z)-decenoyl-[ACP]. Its pathway is lipid metabolism; fatty acid biosynthesis. Necessary for the introduction of cis unsaturation into fatty acids. Catalyzes the dehydration of (3R)-3-hydroxydecanoyl-ACP to E-(2)-decenoyl-ACP and then its isomerization to Z-(3)-decenoyl-ACP. Can catalyze the dehydratase reaction for beta-hydroxyacyl-ACPs with saturated chain lengths up to 16:0, being most active on intermediate chain length. This Shewanella sediminis (strain HAW-EB3) protein is 3-hydroxydecanoyl-[acyl-carrier-protein] dehydratase.